The chain runs to 425 residues: Serine hydroxymethyltransferase (425 aa).

Residues L126 and 130-132 (GHL) each bind (6S)-5,6,7,8-tetrahydrofolate. Position 234 is an N6-(pyridoxal phosphate)lysine (K234).

The protein belongs to the SHMT family. As to quaternary structure, homodimer. Pyridoxal 5'-phosphate is required as a cofactor.

The protein resides in the cytoplasm. The catalysed reaction is (6R)-5,10-methylene-5,6,7,8-tetrahydrofolate + glycine + H2O = (6S)-5,6,7,8-tetrahydrofolate + L-serine. Its pathway is one-carbon metabolism; tetrahydrofolate interconversion. It functions in the pathway amino-acid biosynthesis; glycine biosynthesis; glycine from L-serine: step 1/1. In terms of biological role, catalyzes the reversible interconversion of serine and glycine with tetrahydrofolate (THF) serving as the one-carbon carrier. This reaction serves as the major source of one-carbon groups required for the biosynthesis of purines, thymidylate, methionine, and other important biomolecules. Also exhibits THF-independent aldolase activity toward beta-hydroxyamino acids, producing glycine and aldehydes, via a retro-aldol mechanism. The sequence is that of Serine hydroxymethyltransferase from Desulfotalea psychrophila (strain LSv54 / DSM 12343).